A 354-amino-acid chain; its full sequence is 5,10-methenyltetrahydromethanopterin hydrogenase (354 aa).

Belongs to the HMD family.

It catalyses the reaction 5,10-methenyl-5,6,7,8-tetrahydromethanopterin + H2 = 5,10-methylenetetrahydromethanopterin + H(+). It functions in the pathway one-carbon metabolism; methanogenesis from CO(2); 5,10-methylene-5,6,7,8-tetrahydromethanopterin from 5,10-methenyl-5,6,7,8-tetrahydromethanopterin (hydrogen route): step 1/1. Functionally, catalyzes the reversible reduction of methenyl-H(4)MPT(+) to methylene-H(4)MPT. The sequence is that of 5,10-methenyltetrahydromethanopterin hydrogenase from Methanococcus maripaludis (strain DSM 14266 / JCM 13030 / NBRC 101832 / S2 / LL).